A 323-amino-acid chain; its full sequence is Small ribosomal subunit protein uS2 (323 aa).

The interval 295-323 (VVNRDRAGFNKKQPKAEEAAKPAEKKAEK) is disordered.

It belongs to the universal ribosomal protein uS2 family.

The polypeptide is Small ribosomal subunit protein uS2 (Mycoplasmoides gallisepticum (strain R(low / passage 15 / clone 2)) (Mycoplasma gallisepticum)).